A 96-amino-acid polypeptide reads, in one-letter code: Prokineticin Bv8-like peptide 2 (96 aa).

The first 19 residues, 1 to 19 (MKCFAQIVVLLLVIAFSHG), serve as a signal peptide directing secretion. 5 disulfide bridges follow: Cys-26–Cys-38, Cys-32–Cys-50, Cys-37–Cys-78, Cys-60–Cys-86, and Cys-80–Cys-95.

This sequence belongs to the AVIT (prokineticin) family. Expressed by the skin glands.

It localises to the secreted. Potent agonist for both PKR1/PROKR1 and PKR2/PROKR2, and inducer of a potent and long-lasting hyperalgesia. Also potentiates capsaicin-induced TRPV1 current when tested on DRG neurons. At subnanomolar concentrations, this protein both induces potent chemotaxis of macrophages and stimulates LPS-induced production of the pro-inflammatory cytokines IL-1 and IL-12. In vivo, potently stimulates the contraction of the guinea-pig gastrointestinal (GI) smooth muscle (nanomolar concentration) and rabbit aortic rings. The sequence is that of Prokineticin Bv8-like peptide 2 from Bombina maxima (Giant fire-bellied toad).